The following is a 276-amino-acid chain: MNSKNYHQKKRFGQHWLVNKKILEKIKEIAVLNENDFILEIGPGKGALTSKLLDSEIKKLHAIELDKDLINLLNDKFNNNDKFSLQQGDILSVNLDSINKKITKVIANIPYNITGPILDIFIGRLGIIRNYNYEKIIFLMQKDVVDRILSKEGSPNAGALSIRIQLLSKIKRICDVPPSSFSPPPKVFSSLVVFEPIKNDLRLDISLEKYIDKLLRISFNSRRKMLRNTLNSILSNEEINELSESSKVCFNLRPQDISIHQWIKLAENCIKIKKKI.

Residues His-15, Leu-17, Gly-42, Glu-64, Asp-89, and Asn-108 each coordinate S-adenosyl-L-methionine.

It belongs to the class I-like SAM-binding methyltransferase superfamily. rRNA adenine N(6)-methyltransferase family. RsmA subfamily.

The protein resides in the cytoplasm. It catalyses the reaction adenosine(1518)/adenosine(1519) in 16S rRNA + 4 S-adenosyl-L-methionine = N(6)-dimethyladenosine(1518)/N(6)-dimethyladenosine(1519) in 16S rRNA + 4 S-adenosyl-L-homocysteine + 4 H(+). Functionally, specifically dimethylates two adjacent adenosines (A1518 and A1519) in the loop of a conserved hairpin near the 3'-end of 16S rRNA in the 30S particle. May play a critical role in biogenesis of 30S subunits. This chain is Ribosomal RNA small subunit methyltransferase A, found in Prochlorococcus marinus (strain MIT 9312).